The sequence spans 77 residues: uncharacterized protein (77 aa).

Residues 36–52 (FYQLILKVLSALLLLSV) form a helical membrane-spanning segment.

Its subcellular location is the membrane. This is an uncharacterized protein from Saccharomyces cerevisiae (strain ATCC 204508 / S288c) (Baker's yeast).